A 327-amino-acid polypeptide reads, in one-letter code: Germination protease (327 aa).

Positions 1-7 (MNSVRTD) are excised as a propeptide.

The protein belongs to the peptidase A25 family. Homotetramer. Autoproteolytically processed. The inactive tetrameric zymogen termed p46 autoprocesses to a smaller form termed p41, which is active only during spore germination.

It carries out the reaction Endopeptidase action with P4 Glu or Asp, P1 preferably Glu &gt; Asp, P1' hydrophobic and P2' Ala.. In terms of biological role, initiates the rapid degradation of small, acid-soluble proteins during spore germination. The protein is Germination protease of Clostridium acetobutylicum (strain ATCC 824 / DSM 792 / JCM 1419 / IAM 19013 / LMG 5710 / NBRC 13948 / NRRL B-527 / VKM B-1787 / 2291 / W).